The sequence spans 320 residues: tRNA-cytidine(32) 2-sulfurtransferase (320 aa).

A PP-loop motif motif is present at residues Ser54 to Ser59. Residues Cys129, Cys132, and Cys220 each coordinate [4Fe-4S] cluster.

This sequence belongs to the TtcA family. In terms of assembly, homodimer. Mg(2+) is required as a cofactor. Requires [4Fe-4S] cluster as cofactor.

It localises to the cytoplasm. It catalyses the reaction cytidine(32) in tRNA + S-sulfanyl-L-cysteinyl-[cysteine desulfurase] + AH2 + ATP = 2-thiocytidine(32) in tRNA + L-cysteinyl-[cysteine desulfurase] + A + AMP + diphosphate + H(+). The protein operates within tRNA modification. Its function is as follows. Catalyzes the ATP-dependent 2-thiolation of cytidine in position 32 of tRNA, to form 2-thiocytidine (s(2)C32). The sulfur atoms are provided by the cysteine/cysteine desulfurase (IscS) system. In Bordetella bronchiseptica (strain ATCC BAA-588 / NCTC 13252 / RB50) (Alcaligenes bronchisepticus), this protein is tRNA-cytidine(32) 2-sulfurtransferase.